The primary structure comprises 3608 residues: Serine-rich adhesin for platelets (3608 aa).

A signal peptide spans 1 to 91 (MSRKERNFKR…FAMLNDHHAY (91 aa)). The tract at residues 92–302 (AASETPMTSE…DSTSTSTSTA (211 aa)) is serine-rich repeat region 1, SRR1. Disordered stretches follow at residues 105 to 280 (NSET…SESQ), 495 to 3575 (DPTS…SNST), and 3588 to 3608 (LGLF…GSEQ). Residues 114 to 201 (STTVTKSETS…DNSTSNNSTT (88 aa)) are compositionally biased toward low complexity. Polar residues predominate over residues 209–220 (QANTTSTDSQKG). Composition is skewed to low complexity over residues 221-234 (STST…STST), 244-280 (TESN…SESQ), and 497-3545 (TSTA…ESQS). The non-repeat region (NRR) stretch occupies residues 303-755 (PLKLRTFSRL…STSLSGSESA (453 aa)). A serine-rich repeat region 2, SRR2 region spans residues 756–3567 (SLSDSASAST…HDAKDELPDT (2812 aa)). An LPXTG sorting signal motif is present at residues 3564-3568 (LPDTG). Pentaglycyl murein peptidoglycan amidated threonine is present on Thr-3567. Positions 3568-3608 (GDSDSNSTGLVSAVAAMLAGLGLFGKSRKNKKDKKNKGSEQ) are cleaved as a propeptide — removed by sortase. Over residues 3593–3602 (KSRKNKKDKK) the composition is skewed to basic residues.

The protein belongs to the serine-rich repeat protein (SRRP) family. Proteolytically cleaved by a metalloprotease. In terms of processing, glycosylated. It is probable that most of the Ser residues in SSR1 and SSR2 are O-GlcNAcylated. Sequential glycosylation by sugar transferases are able to generate complex sugar polymorphisms.

The protein resides in the secreted. It localises to the cell wall. Mediates binding to human platelets, possibly through a receptor-ligand interaction. The chain is Serine-rich adhesin for platelets (sraP) from Staphylococcus haemolyticus (strain JCSC1435).